Here is a 55-residue protein sequence, read N- to C-terminus: UPF0391 membrane protein Sfum_0248 (55 aa).

Transmembrane regions (helical) follow at residues 4–24 (WALI…GGII) and 28–48 (AWIA…SLLS).

Belongs to the UPF0391 family.

It is found in the cell membrane. This chain is UPF0391 membrane protein Sfum_0248, found in Syntrophobacter fumaroxidans (strain DSM 10017 / MPOB).